Reading from the N-terminus, the 97-residue chain is Cobalt transport protein CbiN (97 aa).

A run of 2 helical transmembrane segments spans residues 6 to 26 (VLMI…YSGL) and 68 to 88 (SLLF…FFGY).

Belongs to the CbiN family. In terms of assembly, forms an energy-coupling factor (ECF) transporter complex composed of an ATP-binding protein (A component, CbiO), a transmembrane protein (T component, CbiQ) and 2 possible substrate-capture proteins (S components, CbiM and CbiN) of unknown stoichimetry.

Its subcellular location is the cell membrane. It functions in the pathway cofactor biosynthesis; adenosylcobalamin biosynthesis. In terms of biological role, part of the energy-coupling factor (ECF) transporter complex CbiMNOQ involved in cobalt import. The chain is Cobalt transport protein CbiN from Methanococcus maripaludis (strain C5 / ATCC BAA-1333).